We begin with the raw amino-acid sequence, 333 residues long: Glycerol-3-phosphate dehydrogenase [NAD(P)+] (333 aa).

NADPH is bound by residues Ser10, Trp11, and Lys105. Lys105, Gly136, and Thr138 together coordinate sn-glycerol 3-phosphate. Ala140 is an NADPH binding site. Positions 191, 244, 254, 255, and 256 each coordinate sn-glycerol 3-phosphate. Residue Lys191 is the Proton acceptor of the active site. Arg255 is a binding site for NADPH. Val279 and Glu281 together coordinate NADPH.

It belongs to the NAD-dependent glycerol-3-phosphate dehydrogenase family.

The protein localises to the cytoplasm. The enzyme catalyses sn-glycerol 3-phosphate + NAD(+) = dihydroxyacetone phosphate + NADH + H(+). The catalysed reaction is sn-glycerol 3-phosphate + NADP(+) = dihydroxyacetone phosphate + NADPH + H(+). The protein operates within membrane lipid metabolism; glycerophospholipid metabolism. Its function is as follows. Catalyzes the reduction of the glycolytic intermediate dihydroxyacetone phosphate (DHAP) to sn-glycerol 3-phosphate (G3P), the key precursor for phospholipid synthesis. This Trichlorobacter lovleyi (strain ATCC BAA-1151 / DSM 17278 / SZ) (Geobacter lovleyi) protein is Glycerol-3-phosphate dehydrogenase [NAD(P)+].